We begin with the raw amino-acid sequence, 601 residues long: ATP-dependent lipid A-core flippase (601 aa).

Residues 28 to 328 enclose the ABC transmembrane type-1 domain; it reads LLSVVGLIVY…LTRVNAEFQR (301 aa). The next 6 helical transmembrane spans lie at 32 to 52, 81 to 101, 160 to 180, 183 to 203, 267 to 287, and 296 to 316; these read VGLIVYGLVDAAFISFIGPFI, VLLMAPIVVILMFSLRGFANF, ALISIVRDSVTIIGMLGLMFY, WKLSLCILVIGPIMGVVITIV, AVSQPLIMVIGSFALAFVLYA, and DLTAGTFATILGAMMAMLQPI. Residues 360–597 form the ABC transporter domain; it reads LRFDNVSFSY…GGMYAKLYQM (238 aa). 394–401 lines the ATP pocket; it reads GRSGSGKS.

This sequence belongs to the ABC transporter superfamily. Lipid exporter (TC 3.A.1.106) family. Homodimer.

It is found in the cell inner membrane. It carries out the reaction ATP + H2O + lipid A-core oligosaccharideSide 1 = ADP + phosphate + lipid A-core oligosaccharideSide 2.. Its function is as follows. Involved in lipopolysaccharide (LPS) biosynthesis. Translocates lipid A-core from the inner to the outer leaflet of the inner membrane. Transmembrane domains (TMD) form a pore in the inner membrane and the ATP-binding domain (NBD) is responsible for energy generation. This is ATP-dependent lipid A-core flippase from Shewanella oneidensis (strain ATCC 700550 / JCM 31522 / CIP 106686 / LMG 19005 / NCIMB 14063 / MR-1).